Here is a 186-residue protein sequence, read N- to C-terminus: Fucolectin-6 (186 aa).

Positions M1–A32 are cleaved as a signal peptide. The tract at residues Q40–N186 is F5/8 type C-like. Positions 67, 70, 72, and 81 each coordinate Ca(2+). Cystine bridges form between C82–C175, C114–C115, and C137–C153. H84 and R111 together coordinate alpha-L-fucose. Positions R111–D113 match the Cell attachment site motif. Residue R118 coordinates alpha-L-fucose. 2 residues coordinate Ca(2+): C175 and E176.

It belongs to the fucolectin family. Homotrimer. As to expression, gill mucous cells.

It is found in the secreted. Functionally, acts as a defensive agent. Recognizes blood group fucosylated oligosaccharides including A, B, H and Lewis B-type antigens. Does not recognize Lewis A antigen and has low affinity for monovalent haptens. The protein is Fucolectin-6 of Anguilla japonica (Japanese eel).